Here is an 82-residue protein sequence, read N- to C-terminus: DNA-directed RNA polymerase subunit omega (82 aa).

This sequence belongs to the RNA polymerase subunit omega family. As to quaternary structure, in cyanobacteria the RNAP catalytic core is composed of 2 alpha, 1 beta, 1 beta', 1 gamma and 1 omega subunit. When a sigma factor is associated with the core the holoenzyme is formed, which can initiate transcription.

The catalysed reaction is RNA(n) + a ribonucleoside 5'-triphosphate = RNA(n+1) + diphosphate. Promotes RNA polymerase assembly. Latches the N- and C-terminal regions of the beta' subunit thereby facilitating its interaction with the beta and alpha subunits. The sequence is that of DNA-directed RNA polymerase subunit omega from Synechococcus sp. (strain CC9902).